The sequence spans 84 residues: Small ribosomal subunit protein bS18 (84 aa).

This sequence belongs to the bacterial ribosomal protein bS18 family. Part of the 30S ribosomal subunit. Forms a tight heterodimer with protein bS6.

In terms of biological role, binds as a heterodimer with protein bS6 to the central domain of the 16S rRNA, where it helps stabilize the platform of the 30S subunit. The sequence is that of Small ribosomal subunit protein bS18 from Mycobacterium leprae (strain Br4923).